The chain runs to 38 residues: Potassium channel toxin alpha-KTx 6.4 (38 aa).

Disulfide bonds link C6-C27, C12-C32, C16-C34, and C22-C37.

This sequence belongs to the short scorpion toxin superfamily. Potassium channel inhibitor family. Alpha-KTx 06 subfamily. As to expression, expressed by the venom gland.

The protein resides in the secreted. Its function is as follows. Potently, completely and reversibly blocks voltage-gated potassium channel Kv1.2/KCNA2 and Shaker B (Sh). Also blocks small conductance (SK) calcium-activated potassium channel (KCNN). The sequence is that of Potassium channel toxin alpha-KTx 6.4 from Pandinus imperator (Emperor scorpion).